The sequence spans 461 residues: Phosphoglycerate kinase, chloroplastic (461 aa).

The N-terminal 60 residues, 1-60 (MALSMKMRANARVSGRRVAAVAPRVVPFSSASSSVLRSGFALRCLWTSAAWAALASVVEA), are a transit peptide targeting the chloroplast. Residues Ala82, Asp83, Asn85, Arg100, Ser122, His123, Gly125, Arg126, Arg182, His214, and Arg215 each contribute to the (2R)-3-phosphoglycerate site. Position 260 (Gly260) interacts with ADP. Gly260 serves as a coordination point for CDP. AMP contacts are provided by Lys262 and Lys266. Lys266 serves as a coordination point for ATP. ADP is bound at residue Gly284. Residue Gly284 participates in CDP binding. Residues Gly285 and Gly357 each contribute to the AMP site. The ATP site is built by Gly285 and Gly357. 2 residues coordinate CDP: Gly382 and Phe387. Phe387 contacts ADP. Residue Glu388 coordinates AMP. ATP is bound by residues Glu388, Asp419, and Ser420. Position 419 (Asp419) interacts with Mg(2+).

It belongs to the phosphoglycerate kinase family. In terms of assembly, monomer. Mg(2+) is required as a cofactor.

It localises to the plastid. Its subcellular location is the chloroplast. The catalysed reaction is (2R)-3-phosphoglycerate + ATP = (2R)-3-phospho-glyceroyl phosphate + ADP. Its pathway is carbohydrate biosynthesis; Calvin cycle. In Chlamydomonas reinhardtii (Chlamydomonas smithii), this protein is Phosphoglycerate kinase, chloroplastic.